A 208-amino-acid chain; its full sequence is Uracil phosphoribosyltransferase (208 aa).

Residues Arg-78, Arg-103, and Asp-130–Ser-138 each bind 5-phospho-alpha-D-ribose 1-diphosphate. Residues Ile-193 and Gly-198–Ala-200 contribute to the uracil site. Residue Asp-199 coordinates 5-phospho-alpha-D-ribose 1-diphosphate.

The protein belongs to the UPRTase family. Mg(2+) serves as cofactor.

The enzyme catalyses UMP + diphosphate = 5-phospho-alpha-D-ribose 1-diphosphate + uracil. It participates in pyrimidine metabolism; UMP biosynthesis via salvage pathway; UMP from uracil: step 1/1. With respect to regulation, allosterically activated by GTP. Catalyzes the conversion of uracil and 5-phospho-alpha-D-ribose 1-diphosphate (PRPP) to UMP and diphosphate. The polypeptide is Uracil phosphoribosyltransferase (Aliivibrio fischeri (strain MJ11) (Vibrio fischeri)).